A 142-amino-acid polypeptide reads, in one-letter code: Ribosome-binding factor A (142 aa).

Residues 118 to 142 form a disordered region; sequence DKNGDAEVDDTQVDDEPSVDSEKGE. The segment covering 123–136 has biased composition (acidic residues); that stretch reads AEVDDTQVDDEPSV.

It belongs to the RbfA family. In terms of assembly, monomer. Binds 30S ribosomal subunits, but not 50S ribosomal subunits or 70S ribosomes.

The protein localises to the cytoplasm. In terms of biological role, one of several proteins that assist in the late maturation steps of the functional core of the 30S ribosomal subunit. Associates with free 30S ribosomal subunits (but not with 30S subunits that are part of 70S ribosomes or polysomes). Required for efficient processing of 16S rRNA. May interact with the 5'-terminal helix region of 16S rRNA. The sequence is that of Ribosome-binding factor A from Colwellia psychrerythraea (strain 34H / ATCC BAA-681) (Vibrio psychroerythus).